Reading from the N-terminus, the 56-residue chain is MFIAWYWIVLIALVVVGYFLHLKRYCRAFRQDRDALLEARNKYLNSTREETAEKVE.

The helical transmembrane segment at 2-22 threads the bilayer; the sequence is FIAWYWIVLIALVVVGYFLHL.

The protein localises to the cell inner membrane. The chain is Protein YqiD from Escherichia coli (strain K12).